The following is a 291-amino-acid chain: Protease HtpX homolog (291 aa).

2 consecutive transmembrane segments (helical) span residues 4–24 (IALF…TASL) and 38–58 (LGAL…ISLL). Histidine 144 contributes to the Zn(2+) binding site. Residue glutamate 145 is part of the active site. Histidine 148 contacts Zn(2+). A run of 2 helical transmembrane segments spans residues 159 to 179 (LIQG…GYFI) and 197 to 217 (VTTV…VAWF). Position 222 (glutamate 222) interacts with Zn(2+).

Belongs to the peptidase M48B family. Zn(2+) serves as cofactor.

The protein resides in the cell inner membrane. This is Protease HtpX homolog from Leptothrix cholodnii (strain ATCC 51168 / LMG 8142 / SP-6) (Leptothrix discophora (strain SP-6)).